We begin with the raw amino-acid sequence, 188 residues long: Ribosome-recycling factor (188 aa).

This sequence belongs to the RRF family.

The protein localises to the cytoplasm. In terms of biological role, responsible for the release of ribosomes from messenger RNA at the termination of protein biosynthesis. May increase the efficiency of translation by recycling ribosomes from one round of translation to another. The protein is Ribosome-recycling factor of Acidiphilium cryptum (strain JF-5).